Reading from the N-terminus, the 1219-residue chain is Cullin-associated NEDD8-dissociated protein 1 (1219 aa).

A2 bears the N-acetylalanine mark. HEAT repeat units lie at residues 44–81 (DLEVRLSSIILQQLDDVAGDVSGLAVKCLAPLVKKVGE), 83–119 (RIVEMTNKLCDKLLHGKDQHRDTASIALRTVVAQIAP), 209–244 (KATVEVVKNLSNRNAKSEITRTNIQMIGALCRAVGY), 248–288 (THLG…RCPR), 327–363 (EEDDESANEYTDDEDASWKVRRAAAKCLAGLIVSRSE), 367–404 (KVYQEACPKLIDRFKEREENVKMDVFNTFIDLLRQTGN), 423–460 (QEVSKIVKSINRQLREKSVKTKVGAFSVLRELVVVLPD), 464–503 (DHIGSLVPGIERALNDKSSTSNLKIEALVFTKLVLASHAP), 599–636 (AELPSCLPVLVDRMGNEITRLTAVKAFSVIATSPLHIN), 639–676 (CVLDHLIAELTGFLRKANRVLRQATLITMNTLVTAYGD), 808–848 (KNCS…RKDL), 850–883 (AHAGIETIVIESFQSPFEEIKSAASYALGNIAVG), 927–964 (SSVEKILALLFNHCESEEEGVRNVVAECLGKMALIEPE), 966–998 (LVPALQVRTTSPAAFTRATVVTAVKYSVVERPE), 1002–1039 (EIIFPQISSFLMLIKDGDRHVRRAAVSALSTFAHYKPN), 1043–1079 (GLLPELLPLLYDQTVIKKELIRTVDLGPFKHVVDDGL), 1101–1137 (NPSSFIVPFLKSGLEDHYDLKMLCHLILSLLADKCPS), and 1141–1180 (AVLDSLVEPLHKTISFKPKQDAVKQEHDRNEDMIRSALRA). The interval 311-340 (FTDNMEEDTDNETLEDEEDDESANEYTDDE) is disordered. The segment covering 314–340 (NMEEDTDNETLEDEEDDESANEYTDDE) has biased composition (acidic residues).

This sequence belongs to the CAND family. As to quaternary structure, interacts with CUL1 and CUL4. Binds unneddylated CUL1, but cannot bind CUL1 once it has been neddylated. As to expression, highly expressed in roots. Expressed in stems, flowers and siliques.

Key assembly factor of SCF (SKP1-CUL1-F-box protein) E3 ubiquitin ligase complexes that promotes the exchange of the substrate-recognition F-box subunit in SCF complexes, thereby playing a key role in the cellular repertoire of SCF complexes. Acts as a F-box protein exchange factor. Required for SCF(TIR1) function. Modulates SCF(TIR1) function through its interactions with the CUL1 subunit. Represses photomorphogenesis by promoting HY5 degradation in darkness. This is Cullin-associated NEDD8-dissociated protein 1 (CAND1) from Arabidopsis thaliana (Mouse-ear cress).